Here is a 427-residue protein sequence, read N- to C-terminus: Cyclin-L1-1 (427 aa).

The segment at His-258 to Gln-427 is disordered. A compositionally biased stretch (polar residues) spans Asp-263–Ala-276. 4 stretches are compositionally biased toward basic and acidic residues: residues Gln-289–Lys-311, Lys-328–Arg-382, Asp-390–Lys-400, and Arg-407–Lys-421.

It belongs to the cyclin family. Cyclin L subfamily.

This chain is Cyclin-L1-1 (CYCL1-1), found in Oryza sativa subsp. japonica (Rice).